The primary structure comprises 137 residues: 3-hydroxyacyl-[acyl-carrier-protein] dehydratase FabZ (137 aa).

Residue histidine 46 is part of the active site.

It belongs to the thioester dehydratase family. FabZ subfamily.

Its subcellular location is the cytoplasm. It carries out the reaction a (3R)-hydroxyacyl-[ACP] = a (2E)-enoyl-[ACP] + H2O. In terms of biological role, involved in unsaturated fatty acids biosynthesis. Catalyzes the dehydration of short chain beta-hydroxyacyl-ACPs and long chain saturated and unsaturated beta-hydroxyacyl-ACPs. This is 3-hydroxyacyl-[acyl-carrier-protein] dehydratase FabZ from Thermotoga maritima (strain ATCC 43589 / DSM 3109 / JCM 10099 / NBRC 100826 / MSB8).